The chain runs to 798 residues: Disintegrin and metalloproteinase domain-containing protein B (798 aa).

Residues 1-23 (MKAFSCLLAVIATAASLFQHVDA) form the signal peptide. Topologically, residues 24 to 706 (SHARDKLNNI…VSDWVSRHKP (683 aa)) are extracellular. 5 N-linked (GlcNAc...) asparagine glycosylation sites follow: N32, N226, N227, N313, and N407. The 240-residue stretch at 271-510 (KVALIGVVAD…RTILTNCLTT (240 aa)) folds into the Peptidase M12B domain. 3 disulfides stabilise this stretch: C395–C495, C448–C459, and C580–C600. Position 431 (H431) interacts with Zn(2+). E432 is a catalytic residue. Zn(2+) is bound by residues H435 and H441. The Disintegrin domain maps to 519–608 (GQQCGNGIVE…DCPHDIHSKD (90 aa)). A helical transmembrane segment spans residues 707–727 (IVIGVAVGAGCLLLLAIASCI). Residues 728-798 (CGRSRRQRPR…PGHMPPTRYA (71 aa)) are Cytoplasmic-facing. Residues 734 to 798 (QRPRNRKMPP…PGHMPPTRYA (65 aa)) are disordered. Over residues 775 to 792 (NNIPPPINAPPPAYPGHM) the composition is skewed to pro residues.

Requires Zn(2+) as cofactor.

The protein resides in the membrane. Its function is as follows. Probable zinc protease. The sequence is that of Disintegrin and metalloproteinase domain-containing protein B (ADM-B) from Trichophyton verrucosum (strain HKI 0517).